A 115-amino-acid chain; its full sequence is NADH-ubiquinone oxidoreductase chain 3 (115 aa).

Helical transmembrane passes span 4 to 24 (FIVMMINIILSMSLIIIAFWL), 55 to 75 (FFLVAITFLLFDLEIALLLPL), and 86 to 106 (ITMLTAFILVTVLALGLAYEW).

This sequence belongs to the complex I subunit 3 family. Core subunit of respiratory chain NADH dehydrogenase (Complex I) which is composed of 45 different subunits. Interacts with TMEM186. Interacts with TMEM242.

The protein resides in the mitochondrion inner membrane. The enzyme catalyses a ubiquinone + NADH + 5 H(+)(in) = a ubiquinol + NAD(+) + 4 H(+)(out). Functionally, core subunit of the mitochondrial membrane respiratory chain NADH dehydrogenase (Complex I) which catalyzes electron transfer from NADH through the respiratory chain, using ubiquinone as an electron acceptor. Essential for the catalytic activity of complex I. In Reithrodontomys fulvescens (Fulvous harvest mouse), this protein is NADH-ubiquinone oxidoreductase chain 3.